Consider the following 403-residue polypeptide: Phosphopentomutase (403 aa).

Residues aspartate 13, aspartate 298, histidine 303, aspartate 339, histidine 340, and histidine 351 each coordinate Mn(2+).

Belongs to the phosphopentomutase family. Requires Mn(2+) as cofactor.

Its subcellular location is the cytoplasm. The catalysed reaction is 2-deoxy-alpha-D-ribose 1-phosphate = 2-deoxy-D-ribose 5-phosphate. It carries out the reaction alpha-D-ribose 1-phosphate = D-ribose 5-phosphate. The protein operates within carbohydrate degradation; 2-deoxy-D-ribose 1-phosphate degradation; D-glyceraldehyde 3-phosphate and acetaldehyde from 2-deoxy-alpha-D-ribose 1-phosphate: step 1/2. Its function is as follows. Isomerase that catalyzes the conversion of deoxy-ribose 1-phosphate (dRib-1-P) and ribose 1-phosphate (Rib-1-P) to deoxy-ribose 5-phosphate (dRib-5-P) and ribose 5-phosphate (Rib-5-P), respectively. This Streptococcus pyogenes serotype M2 (strain MGAS10270) protein is Phosphopentomutase.